We begin with the raw amino-acid sequence, 97 residues long: Large ribosomal subunit protein bL28 (97 aa).

Belongs to the bacterial ribosomal protein bL28 family.

The chain is Large ribosomal subunit protein bL28 from Rickettsia canadensis (strain McKiel).